The chain runs to 540 residues: Na(+)/H(+) antiporter NhaS2 (540 aa).

10 consecutive transmembrane segments (helical) span residues 29-49 (ITTL…VALV), 71-91 (GLSV…ILIF), 117-137 (VVIS…LAWV), 138-158 (TAAG…IAAF), 207-227 (IFVA…LCVG), 256-276 (LGVS…NLAL), 296-316 (FGVN…SILL), 323-343 (LIAI…LLYL), 358-378 (VLIA…ALPL), and 389-409 (LVFS…PWVV).

Belongs to the monovalent cation:proton antiporter 1 (CPA1) transporter (TC 2.A.36) family.

Its subcellular location is the cell membrane. In terms of biological role, required for Na(+) uptake into the cell, especially at low external Na(+) concentrations or low Na(+)/K(+) ratios. May be part of a sodium cycle that permits re-entry of sodium into the cell. This chain is Na(+)/H(+) antiporter NhaS2 (nhaS2), found in Synechocystis sp. (strain ATCC 27184 / PCC 6803 / Kazusa).